Here is a 362-residue protein sequence, read N- to C-terminus: Beta-ketoacyl-[acyl-carrier-protein] synthase III 2 (362 aa).

Catalysis depends on residues Cys-113 and His-251. Residues 252-256 form an ACP-binding region; that stretch reads QANIR. Asn-281 is a catalytic residue.

Belongs to the thiolase-like superfamily. FabH family. Homodimer.

Its subcellular location is the cytoplasm. The enzyme catalyses malonyl-[ACP] + acetyl-CoA + H(+) = 3-oxobutanoyl-[ACP] + CO2 + CoA. The protein operates within lipid metabolism; fatty acid biosynthesis. In terms of biological role, catalyzes the condensation reaction of fatty acid synthesis by the addition to an acyl acceptor of two carbons from malonyl-ACP. Catalyzes the first condensation reaction which initiates fatty acid synthesis and may therefore play a role in governing the total rate of fatty acid production. Possesses both acetoacetyl-ACP synthase and acetyl transacylase activities. Its substrate specificity determines the biosynthesis of branched-chain and/or straight-chain of fatty acids. This is Beta-ketoacyl-[acyl-carrier-protein] synthase III 2 from Vibrio vulnificus (strain CMCP6).